We begin with the raw amino-acid sequence, 456 residues long: Bifunctional protein GlmU (456 aa).

The tract at residues 1–229 (MLNSAMSVVI…ISETDGVNNR (229 aa)) is pyrophosphorylase. Residues 11–14 (LAAG), lysine 25, glutamine 76, 81–82 (GT), 103–105 (YGD), glycine 140, glutamate 154, asparagine 169, and asparagine 227 contribute to the UDP-N-acetyl-alpha-D-glucosamine site. Aspartate 105 contacts Mg(2+). Asparagine 227 serves as a coordination point for Mg(2+). The interval 230 to 250 (LQLSRLERIYQAEQAEKLLLS) is linker. The interval 251 to 456 (GVMLRDPARF…QGWQRPVKKK (206 aa)) is N-acetyltransferase. Residues arginine 333 and lysine 351 each contribute to the UDP-N-acetyl-alpha-D-glucosamine site. Histidine 363 serves as the catalytic Proton acceptor. Residues tyrosine 366 and asparagine 377 each contribute to the UDP-N-acetyl-alpha-D-glucosamine site. Acetyl-CoA is bound by residues alanine 380, 386-387 (NY), serine 405, alanine 423, and arginine 440.

This sequence in the N-terminal section; belongs to the N-acetylglucosamine-1-phosphate uridyltransferase family. The protein in the C-terminal section; belongs to the transferase hexapeptide repeat family. As to quaternary structure, homotrimer. Mg(2+) is required as a cofactor.

The protein localises to the cytoplasm. The catalysed reaction is alpha-D-glucosamine 1-phosphate + acetyl-CoA = N-acetyl-alpha-D-glucosamine 1-phosphate + CoA + H(+). The enzyme catalyses N-acetyl-alpha-D-glucosamine 1-phosphate + UTP + H(+) = UDP-N-acetyl-alpha-D-glucosamine + diphosphate. It participates in nucleotide-sugar biosynthesis; UDP-N-acetyl-alpha-D-glucosamine biosynthesis; N-acetyl-alpha-D-glucosamine 1-phosphate from alpha-D-glucosamine 6-phosphate (route II): step 2/2. Its pathway is nucleotide-sugar biosynthesis; UDP-N-acetyl-alpha-D-glucosamine biosynthesis; UDP-N-acetyl-alpha-D-glucosamine from N-acetyl-alpha-D-glucosamine 1-phosphate: step 1/1. The protein operates within bacterial outer membrane biogenesis; LPS lipid A biosynthesis. Catalyzes the last two sequential reactions in the de novo biosynthetic pathway for UDP-N-acetylglucosamine (UDP-GlcNAc). The C-terminal domain catalyzes the transfer of acetyl group from acetyl coenzyme A to glucosamine-1-phosphate (GlcN-1-P) to produce N-acetylglucosamine-1-phosphate (GlcNAc-1-P), which is converted into UDP-GlcNAc by the transfer of uridine 5-monophosphate (from uridine 5-triphosphate), a reaction catalyzed by the N-terminal domain. The protein is Bifunctional protein GlmU of Salmonella choleraesuis (strain SC-B67).